Here is a 346-residue protein sequence, read N- to C-terminus: D-fructose 1,6-bisphosphatase class 2/sedoheptulose 1,7-bisphosphatase 1 (346 aa).

Positions 33, 57, 97, and 100 each coordinate Mn(2+). Substrate is bound by residues glutamate 100–threonine 102, tyrosine 131, arginine 176–arginine 178, and aspartate 198–aspartate 200. Glutamate 225 contacts Mn(2+).

It belongs to the FBPase class 2 family. As to quaternary structure, homotetramer. Mn(2+) is required as a cofactor.

The enzyme catalyses beta-D-fructose 1,6-bisphosphate + H2O = beta-D-fructose 6-phosphate + phosphate. It carries out the reaction D-sedoheptulose 1,7-bisphosphate + H2O = D-sedoheptulose 7-phosphate + phosphate. Its pathway is carbohydrate biosynthesis; Calvin cycle. Catalyzes the hydrolysis of fructose 1,6-bisphosphate (Fru 1,6-P2) and sedoheptulose 1,7-bisphosphate (Sed 1,7-P2) to fructose 6-phosphate and sedoheptulose 7-phosphate, respectively. This chain is D-fructose 1,6-bisphosphatase class 2/sedoheptulose 1,7-bisphosphatase 1, found in Acaryochloris marina (strain MBIC 11017).